The primary structure comprises 558 residues: Glucose-6-phosphate isomerase (558 aa).

A2 carries the post-translational modification N-acetylalanine. An N6-acetyllysine modification is found at K12. An N6-(2-hydroxyisobutyryl)lysine modification is found at K34. At S107 the chain carries Phosphoserine. Phosphothreonine is present on T109. At K142 the chain carries N6-acetyllysine. G159–S160 provides a ligand contact to D-glucose 6-phosphate. S185 carries the post-translational modification Phosphoserine; by CK2. S210 to T215 is a D-glucose 6-phosphate binding site. T250 carries the phosphothreonine modification. Residues Q354, E358, and H389 each coordinate D-glucose 6-phosphate. Catalysis depends on E358, which acts as the Proton donor. The active site involves H389. K454 bears the N6-acetyllysine; alternate mark. K454 is modified (N6-malonyllysine; alternate). Position 454 is an N6-succinyllysine; alternate (K454). S455 is subject to Phosphoserine. K519 contributes to the D-glucose 6-phosphate binding site. K519 is a catalytic residue.

Belongs to the GPI family. As to quaternary structure, homodimer; in the catalytically active form. Monomer in the secreted form. In terms of processing, phosphorylation at Ser-185 by CK2 has been shown to decrease enzymatic activity and may contribute to secretion by a non-classical secretory pathway. ISGylated.

It localises to the cytoplasm. Its subcellular location is the secreted. It carries out the reaction alpha-D-glucose 6-phosphate = beta-D-fructose 6-phosphate. It functions in the pathway carbohydrate degradation; glycolysis; D-glyceraldehyde 3-phosphate and glycerone phosphate from D-glucose: step 2/4. Functionally, in the cytoplasm, catalyzes the conversion of glucose-6-phosphate to fructose-6-phosphate, the second step in glycolysis, and the reverse reaction during gluconeogenesis. Besides it's role as a glycolytic enzyme, also acts as a secreted cytokine: acts as an angiogenic factor (AMF) that stimulates endothelial cell motility. Acts as a neurotrophic factor, neuroleukin, for spinal and sensory neurons. It is secreted by lectin-stimulated T-cells and induces immunoglobulin secretion. This Macaca fascicularis (Crab-eating macaque) protein is Glucose-6-phosphate isomerase.